We begin with the raw amino-acid sequence, 355 residues long: Putative testis-specific Y-encoded-like protein 3 (355 aa).

The segment at 1–131 (MADKRAGTPE…GEEKQEVAAE (131 aa)) is disordered. The span at 93–128 (ASEKAEDANKEEGAIFKKEPAEEVEKQQEGEEKQEV) shows a compositional bias: basic and acidic residues.

It belongs to the nucleosome assembly protein (NAP) family.

In Homo sapiens (Human), this protein is Putative testis-specific Y-encoded-like protein 3 (TSPY26P).